Here is a 96-residue protein sequence, read N- to C-terminus: Phosphoribosyl-ATP pyrophosphatase (96 aa).

The protein belongs to the PRA-PH family.

It localises to the cytoplasm. The enzyme catalyses 1-(5-phospho-beta-D-ribosyl)-ATP + H2O = 1-(5-phospho-beta-D-ribosyl)-5'-AMP + diphosphate + H(+). The protein operates within amino-acid biosynthesis; L-histidine biosynthesis; L-histidine from 5-phospho-alpha-D-ribose 1-diphosphate: step 2/9. This is Phosphoribosyl-ATP pyrophosphatase from Methanococcus maripaludis (strain C5 / ATCC BAA-1333).